A 434-amino-acid chain; its full sequence is Zinc finger protein Pegasus (434 aa).

The interval 33–57 (VSSDKEAETLQGAGTDSDQNGLDHP) is disordered. 3 C2H2-type zinc fingers span residues 82–104 (LKCR…IRIH), 110–132 (HRCH…MRSH), and 138–161 (YKCE…RRKH). The span at 260–274 (GQLSSLPPDTQNPAS) shows a compositional bias: polar residues. Residues 260 to 357 (GQLSSLPPDT…PSTPAPALPA (98 aa)) are disordered. Residues 296–313 (CASAVSTSVAQSSSPASP) are compositionally biased toward low complexity. Over residues 337-349 (RTSTPSISNSQPS) the composition is skewed to polar residues. 2 C2H2-type zinc fingers span residues 364–386 (HHCQ…MGCH) and 392–419 (FQCN…CCQH).

It belongs to the Ikaros C2H2-type zinc-finger protein family. Probably self-associates.

The protein localises to the nucleus. In terms of biological role, transcriptional repressor that binds the core 5'GNNTGTNG-3' DNA consensus sequence. This is Zinc finger protein Pegasus (ikzf5) from Xenopus tropicalis (Western clawed frog).